Consider the following 383-residue polypeptide: Protein arginine N-methyltransferase PRMT10 (383 aa).

The interval 1-23 (MRSSQNGGAMGGRAAGTGGGGPS) is disordered. Gly residues predominate over residues 8–22 (GAMGGRAAGTGGGGP). Residues 29–360 (EVDYAQYFCT…KENHRLMEIE (332 aa)) form the SAM-dependent MTase PRMT-type domain. S-adenosyl-L-methionine is bound by residues Gln-45, Arg-54, Gly-78, Glu-100, and Glu-129. Catalysis depends on residues Glu-143 and Glu-152. The interval 190-230 (DRKRNDFDGAMADWHNFSDEIKSYYGVDMGVLTKPFAEEQE) is dimerization arm.

This sequence belongs to the class I-like SAM-binding methyltransferase superfamily. Protein arginine N-methyltransferase family. As to quaternary structure, ring-like homodimer.

It carries out the reaction L-arginyl-[protein] + 2 S-adenosyl-L-methionine = N(omega),N(omega)-dimethyl-L-arginyl-[protein] + 2 S-adenosyl-L-homocysteine + 2 H(+). In terms of biological role, methylates (mono and asymmetric dimethylation) the guanidino nitrogens of arginyl residues in some proteins. Essential for regulating flowering time. The sequence is that of Protein arginine N-methyltransferase PRMT10 (PRMT10) from Arabidopsis thaliana (Mouse-ear cress).